A 57-amino-acid polypeptide reads, in one-letter code: Large ribosomal subunit protein bL33 (57 aa).

The protein belongs to the bacterial ribosomal protein bL33 family.

The sequence is that of Large ribosomal subunit protein bL33 from Shewanella amazonensis (strain ATCC BAA-1098 / SB2B).